A 168-amino-acid polypeptide reads, in one-letter code: MTSRWIFGLVFLVCAGLLAVAFYMEHVMGLEPCPLCWLQRFGFMGAGLVSLLAFLHGPRGFGNRVYGLLLIVAAGAGLAVAGRQLWLQSLPADQVPACGPSVDYMLEVLPWFEVLQTALKGTGDCAEVVWRFLGLSIPGWTAVFFSLLIVLGLFVMLRRYSPRDWLQS.

At 1–6 (MTSRWI) the chain is on the cytoplasmic side. The chain crosses the membrane as a helical span at residues 7 to 23 (FGLVFLVCAGLLAVAFY). At 24–41 (MEHVMGLEPCPLCWLQRF) the chain is on the periplasmic side. A disulfide bridge connects residues cysteine 33 and cysteine 36. A helical transmembrane segment spans residues 42 to 58 (GFMGAGLVSLLAFLHGP). Over 59 to 65 (RGFGNRV) the chain is Cytoplasmic. The helical transmembrane segment at 66–82 (YGLLLIVAAGAGLAVAG) threads the bilayer. Residues 83-139 (RQLWLQSLPADQVPACGPSVDYMLEVLPWFEVLQTALKGTGDCAEVVWRFLGLSIPG) are Periplasmic-facing. A disulfide bridge links cysteine 98 with cysteine 125. A helical membrane pass occupies residues 140–158 (WTAVFFSLLIVLGLFVMLR). Over 159–168 (RYSPRDWLQS) the chain is Cytoplasmic.

Belongs to the DsbB family.

The protein localises to the cell inner membrane. Its function is as follows. Required for disulfide bond formation in some periplasmic proteins. Acts by oxidizing the DsbA protein. This Marinobacter nauticus (strain ATCC 700491 / DSM 11845 / VT8) (Marinobacter aquaeolei) protein is Disulfide bond formation protein B.